An 865-amino-acid chain; its full sequence is Nicotinate catabolism cluster-specific transcription factor (865 aa).

2 consecutive C2H2-type zinc fingers follow at residues 8–32 (HACT…SLNH) and 41–63 (YTCQ…LDRH). The tract at residues 74–168 (GKGVLETRKR…SIDDDGTDPD (95 aa)) is disordered. Positions 77-87 (VLETRKRMRRA) match the Nuclear localization signal(NLS) motif. A compositionally biased stretch (basic and acidic residues) spans 78–89 (LETRKRMRRAED). Positions 96-105 (PPKRPSRHQQ) are enriched in basic residues. Residues 108–132 (GPPVGAPLSSSGSVSAGSGRSSRSP) are compositionally biased toward low complexity. The Nuclear export signal (NES) signature appears at 285–289 (LDIDL).

The protein resides in the nucleus. Transcription factor that specifically regulates the expression of the hxn gene cluster that mediates the degradation of nicotinate and related metabolites. This Emericella nidulans (strain FGSC A4 / ATCC 38163 / CBS 112.46 / NRRL 194 / M139) (Aspergillus nidulans) protein is Nicotinate catabolism cluster-specific transcription factor.